We begin with the raw amino-acid sequence, 59 residues long: uncharacterized protein (59 aa).

Composition is skewed to basic and acidic residues over residues methionine 1–arginine 23 and aspartate 36–lysine 45. Residues methionine 1–serine 59 form a disordered region. The segment covering lysine 46–serine 59 has biased composition (gly residues).

This sequence belongs to the con-10 family.

This is an uncharacterized protein from Escherichia coli (strain K12).